A 130-amino-acid chain; its full sequence is Large ribosomal subunit protein bL19c (130 aa).

This sequence belongs to the bacterial ribosomal protein bL19 family.

The protein resides in the plastid. Its subcellular location is the chloroplast. In Chlorella vulgaris (Green alga), this protein is Large ribosomal subunit protein bL19c (rpl19).